Here is a 2628-residue protein sequence, read N- to C-terminus: MMFPINVLLYKWLIFAVTFLWSCKILLRKLLGINITWINLFKLEICGLSLEDGTVRLKSVRFAVFERKLFIKGLRIDSKKSSTNDLHKELPREEERTFIETPEDNGGGFISKILSLSQYWLNGVTIILEDTQLVNNDITIEKFGFFLSIDNSKHIKSLRFDSFLRKLLWNGQTIIADAIFIVNTNLLIGEIMNPLKDGLQVGLDLKLGDLNIPMNLLNLFINKENVDLMSNEKLLQRLADTTKANEELKDEDIAKMKDDLVYAMEKFVDRIKPLKEMNVTVDKLQIKDFPLTNHPELLGMNKYISYNVLVSNINFNTNRFRNEMPGYTLIFEERDSPFKFSIIMARFNIYLNLNRKHQSHAKQLKIIEIPNVSIFGETNLFSQKFRLSNNLHAKELENAIFNIKGNISSLTIDMDPVNISFIKCFLSNIKVFTSSCPKNKILKENSHVKFLTRRRVLFDYFKCFLPLINMKFTLDDPKFVINDKDDLIIGKFSVFMISHHSKRYTLGNNLMEEKEETQHIFYESHWNVELLDMKLQHIIKHQKYEHTILRVDSIAIEEKVQLLPDILCSANADIDTLMLDLSELPTMVMLSELVHNLDSQLANVEENYFKEFYEKFASNLQNMKAECSNMAKCLRQKEILPSDFMFQQLPDFFDYIKINIRDISSTLGARSVFMPRDVFSSVDSQSSKDLIDGKLRKYCNTVEKLQIALFGDKTQWHNKIGSNHATMVRSGQLTNFSKDNKQNPNHKSSIADLDDISTSDATEVNHLWNINLLVNDITTSIIGETPEVSEELSTKTVSKVSNLSIKLFPDTESFSSNESDSKIILQINHSRGTSVVSLMSIFLAVSGIHTLNQIFGHCIHQKMRQSKTKQYFLALSESKKKSCIKSIKWGQLKELLEINFSSEYISQIIALPNGLRTKFEPTSTFITVKNCNTISVSGQYFRMMVESPTQPNFWERMICINGFKVMIHIDLLKQQMKKLNSLQNWEKLPSAITLENDSWHFSIPHHFEMFKIIDSIPTIFKSIKQMLYSLKTSKDDLIIFPHKIETPLSLPKIKLKSKRWLFSISDDPLEAELNTIFQIGLQEQRERLAKLQEFNKRISEDLIKSQKNAKEMKDDFEAIDNAILKHRTGLWAKDGKKRLRKSATDSEIPLTPAALNINGKRDDRPDRTQFISPEIENAYNTLLANFSDSWIKRVKEYKVKERREFDKNFSFLWGFIDYTKLPKDINKKVLPFSTNPFLMNLIIENIDIDIIRPSCGIENIPNFIHDVGKGVPKNTEYSIMIPMHLDAKFSEVRWHLRDYPLPFVSIPPLSSTQSKETIPMRIYGDFMITEDMLQSDRELRTLFVPLIPSVTVENTDRYYSLFVPRTMTSAKIFTDLNFEINSNHTTRVTWGGSYQPAIQQTMQCLDNFSKPPLDPSVKLGFWDKTRYLFHGKINIVWKKRGKFEISLKGAKSPYMLGGESAGFIVGFDGNVNLKCNEDNDPKKFLSCSADKVHFSIPNYFAKPLLVWSRPSTNTMFIPNQDDTNMQRYASFYYLLNTTSSKNEKADKEIMGKSFIEKTGIKLSGGMTLDMGILFERLGPSLNERTFESKKHYLTRLCNPIYVQDLSKHDSYAGFRSDFIHMSFGLSSNSNSAYNAMQLSPNGFKAFFVWWKSFSGNFPVRRGPLFGLQSISPKFGEHLYTISYHADVSPLFINYMYHNADADQILRKNYLEVAEFAGLKAKSSHFIMDLHQRKEVLTEYQAGLNVRRRVMKLKFLAGDVVCQDVDIRTVSGEFSKLNYIEEKEDAEYDIFDNDMSWLDITDFQDAFFINPDNYLPKIKIMPFAFSPQFAYQKRASYGDKYQVDPKTCKPITPFDNRVSHGCTLGHNVSLRTDLVEKRVTVLKKFREKLQEGIRKNKSAGVSEENLNDLLSKANSSVENAELLLKDFQKIFKQHEAGQTEQPFHFDSLNLLKNTKKTLKQFEHRFFIFNVLLKWNEDARSAIFKFFYYANLSNEFASLASGKGLREFEDVIKQREMTDDTTSMEAIPEGTDKANTTKQCHSCDDTEFTTENLLNIFEKNITQLSCDIKNKIHHKFFVQFITPQIQLTSLENPEACVLVSSPFFMLKTLEFDANTTSNTYMQDIFLKRHGILFGNANAFLFNKKDYQEFFELYFGSSSYGQDKKEQWPPWLGLELGFEPSALKKKAVVRNISALLHHQKLAPFSAKYDSLKDKIEDNICGYVPQVNVQVNSDEYLMLTKMALKLFLYVEPEDEELKKYIEKLIIGYDIYDTAQTRKFVNDLHDSEQILAVVEKELLFKRSLLDDIGKLDLSNIHNERMHQLLRLYILRKVFTSNGNNYINRTLVWNIKVNETILHLLDKIDKPFLDIAVAKLNFQRIQHTMGLRKNTVTVKMMQIFDLGENVNYHCILGPLITSSGNDTVGLASDVPLVQITWDVDKPVGGIKVVKNVETTLSSLTIKLEEDRLNKLFEWLSLKELIYDGNGDDDDGASSIFDMVSSESEEGKIEFSEDISSDFNEMLKRSSDYMIVEDLKLNSFKLCISYKGKGKMRLANVTNFVFNFPTLRLSNQTLRVTDLLLALKKVLIKVLIKHTGRFIGNKLKRNSKENKIADDTSPLKQLTTYNSYTEPEELR.

Residues 1-28 form the signal peptide; the sequence is MMFPINVLLYKWLIFAVTFLWSCKILLR. The tract at residues 29–192 is transmembrane domain; that stretch reads KLLGINITWI…NTNLLIGEIM (164 aa). LRR repeat units follow at residues 160–182, 213–236, 271–296, 306–333, 571–596, 835–857, 1944–1967, 2101–2125, and 2303–2327; these read FDSF…IFIV, PMNL…KLLQ, IKPL…NHPE, YNVL…IFEE, NADI…LVHN, VVSL…IFGH, FDSL…FFIF, FFML…IFLK, and IGKL…ILRK.

The protein localises to the cell membrane. Its subcellular location is the endoplasmic reticulum membrane. The protein resides in the mitochondrion membrane. Tube-forming lipid transport protein which binds to phosphatidylinositols and affects phosphatidylinositol-4,5-bisphosphate (PtdIns-4,5-P2) distribution. The sequence is that of Protein FMP27, mitochondrial from Saccharomyces cerevisiae (strain ATCC 204508 / S288c) (Baker's yeast).